Consider the following 182-residue polypeptide: MPLDFNEIRQLLTTIAQTDIAEVTLKSDDFELTVRKAVGVNNSVVPVVTAPLSGVVGSGLPSAIPIVAHAAPSPSPEPGTSRAADHAVTSSGSQPGAKIIDQKLAEVASPMVGTFYRAPAPGEAVFVEVGDRIRQGQTVCIIEAMKLMNEIEADVSGQVIEILVQNGEPVEYNQPLMRIKPD.

A disordered region spans residues 70 to 95 (AAPSPSPEPGTSRAADHAVTSSGSQP). The Biotinyl-binding domain occupies 104 to 180 (LAEVASPMVG…EYNQPLMRIK (77 aa)). Lys-146 is modified (N6-biotinyllysine).

As to quaternary structure, homodimer.

The protein operates within lipid metabolism; fatty acid biosynthesis. This protein is a component of the acetyl coenzyme A carboxylase complex; first, biotin carboxylase catalyzes the carboxylation of the carrier protein and then the transcarboxylase transfers the carboxyl group to form malonyl-CoA. The chain is Biotin carboxyl carrier protein of acetyl-CoA carboxylase (accB) from Nostoc sp. (strain PCC 7120 / SAG 25.82 / UTEX 2576).